Consider the following 855-residue polypeptide: Protein translocase subunit SecA (855 aa).

Residues Gln-85, 103–107, and Asp-492 contribute to the ATP site; that span reads GEGKT. The tract at residues 794–845 is disordered; it reads AAIHEESSSAAAPGPGQNQPGGPGGPSAGPVAPVRNLDKHGRNELCPCGSGK. Residues 801 to 811 show a composition bias toward low complexity; it reads SSAAAPGPGQN. Zn(2+)-binding residues include Cys-839, Cys-841, Cys-850, and Cys-851.

Belongs to the SecA family. As to quaternary structure, monomer and homodimer. Part of the essential Sec protein translocation apparatus which comprises SecA, SecYEG and auxiliary proteins SecDF. Other proteins may also be involved. It depends on Zn(2+) as a cofactor.

The protein localises to the cell membrane. Its subcellular location is the cytoplasm. The catalysed reaction is ATP + H2O + cellular proteinSide 1 = ADP + phosphate + cellular proteinSide 2.. Part of the Sec protein translocase complex. Interacts with the SecYEG preprotein conducting channel. Has a central role in coupling the hydrolysis of ATP to the transfer of proteins into and across the cell membrane, serving as an ATP-driven molecular motor driving the stepwise translocation of polypeptide chains across the membrane. The chain is Protein translocase subunit SecA from Clostridium beijerinckii (strain ATCC 51743 / NCIMB 8052) (Clostridium acetobutylicum).